Consider the following 635-residue polypeptide: Threonine--tRNA ligase (635 aa).

A TGS domain is found at 1–61 (MIKITLKDGK…HKDSSLEILT (61 aa)). A catalytic region spans residues 242–532 (DHRKLGKELD…LIEQYAGAFP (291 aa)). Residues C333, H384, and H509 each contribute to the Zn(2+) site.

This sequence belongs to the class-II aminoacyl-tRNA synthetase family. In terms of assembly, homodimer. Requires Zn(2+) as cofactor.

It is found in the cytoplasm. It carries out the reaction tRNA(Thr) + L-threonine + ATP = L-threonyl-tRNA(Thr) + AMP + diphosphate + H(+). Functionally, catalyzes the attachment of threonine to tRNA(Thr) in a two-step reaction: L-threonine is first activated by ATP to form Thr-AMP and then transferred to the acceptor end of tRNA(Thr). Also edits incorrectly charged L-seryl-tRNA(Thr). The chain is Threonine--tRNA ligase from Clostridium botulinum (strain ATCC 19397 / Type A).